The following is a 482-amino-acid chain: MKFIIKLFPEITIKSQSVRLRFIKILTGNIRNVLKHYDETLAVVRHWDNIEVRAKDENQRLAIRDALTRIPGIHHILEVEDVPFTDMHDIFEKALVQYRDQLEGKTFCVRVKRRGKHDFSSIDVERYVGGGLNQHIESARVKLTNPEVTVHLEVEDDRLLLIKGRYEGIGGFPIGTQEDVLSLISGGFDSGVSSYMLMRRGCRVHYCFFNLGGAAHEIGVRQVAHYLWNRFGSSHRVRFVAINFEPVVGEILEKIDDGQMGVILKRMMVRAASKVAERYGVQALVTGEALGQVSSQTLTNLRLIDNVSDTLILRPLISYDKEHIINLARQIGTEDFARTMPEYCGVISKSPTVKAVKSKIEAEEEKFDFSILDKVVEEANNVDIREIAQQTEQEVVEVETVNGFGPNDVILDIRSVDEQEDKPLKVEGIDVVSLPFYKLSTKFGDLDQNRTWLLWCERGVMSRLQALYLREQGFNNVKVYRP.

Residues 61–165 enclose the THUMP domain; the sequence is LAIRDALTRI…DDRLLLIKGR (105 aa). ATP contacts are provided by residues 183-184, Lys-265, Gly-287, and Gln-296; that span reads LI. Cys-344 and Cys-456 are joined by a disulfide. One can recognise a Rhodanese domain in the interval 404–482; that stretch reads FGPNDVILDI…GFNNVKVYRP (79 aa). Cys-456 serves as the catalytic Cysteine persulfide intermediate.

It belongs to the ThiI family.

Its subcellular location is the cytoplasm. The catalysed reaction is [ThiI sulfur-carrier protein]-S-sulfanyl-L-cysteine + a uridine in tRNA + 2 reduced [2Fe-2S]-[ferredoxin] + ATP + H(+) = [ThiI sulfur-carrier protein]-L-cysteine + a 4-thiouridine in tRNA + 2 oxidized [2Fe-2S]-[ferredoxin] + AMP + diphosphate. It carries out the reaction [ThiS sulfur-carrier protein]-C-terminal Gly-Gly-AMP + S-sulfanyl-L-cysteinyl-[cysteine desulfurase] + AH2 = [ThiS sulfur-carrier protein]-C-terminal-Gly-aminoethanethioate + L-cysteinyl-[cysteine desulfurase] + A + AMP + 2 H(+). The protein operates within cofactor biosynthesis; thiamine diphosphate biosynthesis. Catalyzes the ATP-dependent transfer of a sulfur to tRNA to produce 4-thiouridine in position 8 of tRNAs, which functions as a near-UV photosensor. Also catalyzes the transfer of sulfur to the sulfur carrier protein ThiS, forming ThiS-thiocarboxylate. This is a step in the synthesis of thiazole, in the thiamine biosynthesis pathway. The sulfur is donated as persulfide by IscS. This chain is tRNA sulfurtransferase, found in Escherichia coli O9:H4 (strain HS).